A 206-amino-acid polypeptide reads, in one-letter code: LexA repressor (206 aa).

A DNA-binding region (H-T-H motif) is located at residues 28–48; it reads VREIGQAVGLASSSTVHGHLS. Catalysis depends on for autocatalytic cleavage activity residues Ser128 and Lys166.

This sequence belongs to the peptidase S24 family. Homodimer.

The enzyme catalyses Hydrolysis of Ala-|-Gly bond in repressor LexA.. Its function is as follows. Represses a number of genes involved in the response to DNA damage (SOS response), including recA and lexA. In the presence of single-stranded DNA, RecA interacts with LexA causing an autocatalytic cleavage which disrupts the DNA-binding part of LexA, leading to derepression of the SOS regulon and eventually DNA repair. The protein is LexA repressor of Bacillus cytotoxicus (strain DSM 22905 / CIP 110041 / 391-98 / NVH 391-98).